Consider the following 113-residue polypeptide: Histone H3-8 (113 aa).

Residues 1–17 are compositionally biased toward basic residues; that stretch reads NTGAKAPRKHLANKAAR. Residues 1–31 form a disordered region; that stretch reads NTGAKAPRKHLANKAARKTAAPANAGIKKPH.

This sequence belongs to the histone H3 family. In terms of assembly, the nucleosome is a histone octamer containing two molecules each of H2A, H2B, H3 and H4 assembled in one H3-H4 heterotetramer and two H2A-H2B heterodimers. The octamer wraps approximately 147 bp of DNA.

The protein localises to the nucleus. The protein resides in the chromosome. In terms of biological role, core component of nucleosome. Nucleosomes wrap and compact DNA into chromatin, limiting DNA accessibility to the cellular machineries which require DNA as a template. Histones thereby play a central role in transcription regulation, DNA repair, DNA replication and chromosomal stability. DNA accessibility is regulated via a complex set of post-translational modifications of histones, also called histone code, and nucleosome remodeling. The chain is Histone H3-8 (H3-8) from Stylonychia lemnae (Ciliate).